Reading from the N-terminus, the 75-residue chain is UPF0352 protein ASA_2693 (75 aa).

It belongs to the UPF0352 family.

The chain is UPF0352 protein ASA_2693 from Aeromonas salmonicida (strain A449).